A 99-amino-acid chain; its full sequence is Small ribosomal subunit protein uS14m (99 aa).

It belongs to the universal ribosomal protein uS14 family.

Its subcellular location is the mitochondrion. The chain is Small ribosomal subunit protein uS14m (RPS14) from Prototheca wickerhamii.